The primary structure comprises 252 residues: 5'-nucleotidase SurE (252 aa).

Positions 8, 9, 39, and 91 each coordinate a divalent metal cation.

The protein belongs to the SurE nucleotidase family. A divalent metal cation is required as a cofactor.

Its subcellular location is the cytoplasm. The catalysed reaction is a ribonucleoside 5'-phosphate + H2O = a ribonucleoside + phosphate. Functionally, nucleotidase that shows phosphatase activity on nucleoside 5'-monophosphates. The sequence is that of 5'-nucleotidase SurE from Legionella pneumophila (strain Corby).